The primary structure comprises 487 residues: Acetyl-coenzyme A carboxylase carboxyl transferase subunit beta, chloroplastic (487 aa).

A disordered region spans residues 180-201 (SRNSSENEGSSKRTRTKGSDLT). In terms of domain architecture, CoA carboxyltransferase N-terminal spans 218–487 (LWVQCENCYG…PLNQKSSKIK (270 aa)). Cysteine 222, cysteine 225, cysteine 241, and cysteine 244 together coordinate Zn(2+). The C4-type zinc-finger motif lies at 222 to 244 (CENCYGLNYKKFLKSKMNICEQC).

The protein belongs to the AccD/PCCB family. In terms of assembly, acetyl-CoA carboxylase is a heterohexamer composed of biotin carboxyl carrier protein, biotin carboxylase and 2 subunits each of ACCase subunit alpha and ACCase plastid-coded subunit beta (accD). Zn(2+) is required as a cofactor.

The protein resides in the plastid. It localises to the chloroplast stroma. It catalyses the reaction N(6)-carboxybiotinyl-L-lysyl-[protein] + acetyl-CoA = N(6)-biotinyl-L-lysyl-[protein] + malonyl-CoA. Its pathway is lipid metabolism; malonyl-CoA biosynthesis; malonyl-CoA from acetyl-CoA: step 1/1. Its function is as follows. Component of the acetyl coenzyme A carboxylase (ACC) complex. Biotin carboxylase (BC) catalyzes the carboxylation of biotin on its carrier protein (BCCP) and then the CO(2) group is transferred by the transcarboxylase to acetyl-CoA to form malonyl-CoA. In Atropa belladonna (Belladonna), this protein is Acetyl-coenzyme A carboxylase carboxyl transferase subunit beta, chloroplastic.